A 336-amino-acid chain; its full sequence is 3-isopropylmalate dehydrogenase (336 aa).

R87, R97, R121, and D211 together coordinate substrate. D211, D235, and D239 together coordinate Mg(2+). G271–D283 serves as a coordination point for NAD(+).

This sequence belongs to the isocitrate and isopropylmalate dehydrogenases family. LeuB type 2 subfamily. Homodimer. Mg(2+) is required as a cofactor. The cofactor is Mn(2+).

It localises to the cytoplasm. The enzyme catalyses (2R,3S)-3-isopropylmalate + NAD(+) = 4-methyl-2-oxopentanoate + CO2 + NADH. The protein operates within amino-acid biosynthesis; L-leucine biosynthesis; L-leucine from 3-methyl-2-oxobutanoate: step 3/4. In terms of biological role, catalyzes the oxidation of 3-carboxy-2-hydroxy-4-methylpentanoate (3-isopropylmalate) to 3-carboxy-4-methyl-2-oxopentanoate. The product decarboxylates to 4-methyl-2 oxopentanoate. The polypeptide is 3-isopropylmalate dehydrogenase (leuB) (Mycobacterium tuberculosis (strain CDC 1551 / Oshkosh)).